The primary structure comprises 196 residues: Ras-related protein RabC (196 aa).

13–20 (GESGVGKS) provides a ligand contact to GTP. The short motif at 35–43 (FAPTLGVDF) is the Effector region element. GTP is bound by residues 63–67 (DTAGQ) and 121–124 (NKSD). 2 S-geranylgeranyl cysteine lipidation sites follow: C195 and C196.

The protein belongs to the small GTPase superfamily. Rab family.

The protein localises to the cell membrane. This is Ras-related protein RabC (rabC) from Dictyostelium discoideum (Social amoeba).